Consider the following 508-residue polypeptide: tRNA-2-methylthio-N(6)-dimethylallyladenosine synthase (508 aa).

In terms of domain architecture, MTTase N-terminal spans 13–131 (KTYEVRTYGC…LPVLLERARV (119 aa)). 6 residues coordinate [4Fe-4S] cluster: cysteine 22, cysteine 60, cysteine 94, cysteine 168, cysteine 172, and cysteine 175. The Radical SAM core domain maps to 154 to 385 (RESAYAAWVS…ALQEEISWDE (232 aa)). A TRAM domain is found at 387–455 (KKQVGRTLEL…PHHLLAEGPV (69 aa)).

The protein belongs to the methylthiotransferase family. MiaB subfamily. As to quaternary structure, monomer. [4Fe-4S] cluster serves as cofactor.

The protein localises to the cytoplasm. It carries out the reaction N(6)-dimethylallyladenosine(37) in tRNA + (sulfur carrier)-SH + AH2 + 2 S-adenosyl-L-methionine = 2-methylsulfanyl-N(6)-dimethylallyladenosine(37) in tRNA + (sulfur carrier)-H + 5'-deoxyadenosine + L-methionine + A + S-adenosyl-L-homocysteine + 2 H(+). Its function is as follows. Catalyzes the methylthiolation of N6-(dimethylallyl)adenosine (i(6)A), leading to the formation of 2-methylthio-N6-(dimethylallyl)adenosine (ms(2)i(6)A) at position 37 in tRNAs that read codons beginning with uridine. In Streptomyces avermitilis (strain ATCC 31267 / DSM 46492 / JCM 5070 / NBRC 14893 / NCIMB 12804 / NRRL 8165 / MA-4680), this protein is tRNA-2-methylthio-N(6)-dimethylallyladenosine synthase.